Consider the following 2056-residue polypeptide: E3 ubiquitin-protein ligase TRIP12 (2056 aa).

2 stretches are compositionally biased toward polar residues: residues 1 to 10 (MSSRPNNNPG) and 18 to 27 (RNTAGAQPQE). The disordered stretch occupies residues 1-440 (MSSRPNNNPG…SGESESDDSE (440 aa)). Residues 39–51 (AENKTHSLPESRK) show a composition bias toward basic and acidic residues. Polar residues-rich tracts occupy residues 58 to 67 (KVQSNTTSGP) and 153 to 168 (SQEQ…STSK). 2 stretches are compositionally biased toward low complexity: residues 213-226 (LSKL…SAKA) and 234-253 (SSSS…VSAA). 2 stretches are compositionally biased toward polar residues: residues 317–327 (PGSSKTETSKP) and 363–375 (QKTT…TSRR). Over residues 383-395 (AAAEARRQEKMAD) the composition is skewed to basic and acidic residues. Low complexity predominate over residues 415 to 433 (GAAASSSVAGAVGMTTSGE). The WWE domain occupies 791–905 (MLKKGNAQNT…DPELAKSFIK (115 aa)). Positions 1027-1042 (TTISTGSGTASGNSAA) are enriched in low complexity. Disordered regions lie at residues 1027-1147 (TTIS…ASKD), 1465-1500 (EEEE…DELW), and 1632-1651 (TNPE…PRLD). A compositionally biased stretch (basic residues) spans 1069–1082 (KRKRLPKRGPRRPK). The span at 1085–1094 (PPRDEDKVDN) shows a compositional bias: basic and acidic residues. Composition is skewed to polar residues over residues 1095–1106 (QAKSPTTTQSPK) and 1119–1129 (RLSTQSNSNNI). The K-box stretch occupies residues 1560–1634 (EIIPTSEFNN…AMQRLLDTNP (75 aa)). The region spanning 1949-2056 (PDHGYTHDSR…REGQQSFHLS (108 aa)) is the HECT domain. Cys-2023 acts as the Glycyl thioester intermediate in catalysis.

It belongs to the UPL family. K-HECT subfamily.

The protein localises to the nucleus. The protein resides in the nucleoplasm. It catalyses the reaction S-ubiquitinyl-[E2 ubiquitin-conjugating enzyme]-L-cysteine + [acceptor protein]-L-lysine = [E2 ubiquitin-conjugating enzyme]-L-cysteine + N(6)-ubiquitinyl-[acceptor protein]-L-lysine.. Its pathway is protein modification; protein ubiquitination. Functionally, E3 ubiquitin-protein ligase involved in ubiquitin fusion degradation (UFD) pathway and regulation of DNA repair. Part of the ubiquitin fusion degradation (UFD) pathway, a process that mediates ubiquitination of protein at their N-terminus, regardless of the presence of lysine residues in target proteins. Acts as a key regulator of DNA damage response by acting as a suppressor of RNF168, an E3 ubiquitin-protein ligase that promotes accumulation of 'Lys-63'-linked histone H2A and H2AX at DNA damage sites, thereby acting as a guard against excessive spreading of ubiquitinated chromatin at damaged chromosomes. The chain is E3 ubiquitin-protein ligase TRIP12 (trip12) from Xenopus tropicalis (Western clawed frog).